The sequence spans 430 residues: Histidine--tRNA ligase (430 aa).

Belongs to the class-II aminoacyl-tRNA synthetase family. As to quaternary structure, homodimer.

Its subcellular location is the cytoplasm. The enzyme catalyses tRNA(His) + L-histidine + ATP = L-histidyl-tRNA(His) + AMP + diphosphate + H(+). In Lactococcus lactis subsp. cremoris (strain SK11), this protein is Histidine--tRNA ligase.